Here is a 349-residue protein sequence, read N- to C-terminus: MIYDFFMTWLFPLLIIVGKTLLLLVILLLLVAYLLYADRKIWAAVQLRRGPNVVGPWGLLQSFADLIKFVVKEPIIPAGANKGVFLLAPFVSATLALSTWAVIPVNEGWAVANINVGLLYILAISSLEVYGVIMGGWASNSKYPFLGALRSAAQMVSYEVSIGFVLVTVILVSGSLDLTTIVQKQSHGMGTALGLPFNSFLDWNWLVLFPMFIIFFISALAETNRPPFDLVEAESELVAGHMVEYSSTPYMLFFLGEYVAIVLMCALTTILFLGGWLPPLDVWWLNWVPGIIWFVLKVCFVFFWFAMVKAFVPRYRYDQLMRLGWKVFLPLSLAMVVITAAFLKYTGFA.

8 helical membrane-spanning segments follow: residues 11-31, 83-103, 116-136, 162-182, 200-220, 252-272, 288-308, and 323-343; these read FPLLIIVGKTLLLLVILLLLV, GVFLLAPFVSATLALSTWAVI, VGLLYILAISSLEVYGVIMGG, IGFVLVTVILVSGSLDLTTIV, FLDWNWLVLFPMFIIFFISAL, LFFLGEYVAIVLMCALTTILF, VPGIIWFVLKVCFVFFWFAMV, and LGWKVFLPLSLAMVVITAAFL.

Belongs to the complex I subunit 1 family. As to quaternary structure, NDH-1 is composed of 14 different subunits. Subunits NuoA, H, J, K, L, M, N constitute the membrane sector of the complex.

The protein localises to the cell inner membrane. It catalyses the reaction a quinone + NADH + 5 H(+)(in) = a quinol + NAD(+) + 4 H(+)(out). Functionally, NDH-1 shuttles electrons from NADH, via FMN and iron-sulfur (Fe-S) centers, to quinones in the respiratory chain. The immediate electron acceptor for the enzyme in this species is believed to be ubiquinone. Couples the redox reaction to proton translocation (for every two electrons transferred, four hydrogen ions are translocated across the cytoplasmic membrane), and thus conserves the redox energy in a proton gradient. This subunit may bind ubiquinone. In Bartonella henselae (strain ATCC 49882 / DSM 28221 / CCUG 30454 / Houston 1) (Rochalimaea henselae), this protein is NADH-quinone oxidoreductase subunit H.